We begin with the raw amino-acid sequence, 146 residues long: Hemoglobin subunit beta (146 aa).

N-acetylvaline is present on Val-1. Residues 2-146 (HMTDAEKKLV…VANALAHKYH (145 aa)) enclose the Globin domain. Position 12 is a phosphothreonine (Thr-12). Lys-59 is modified (N6-acetyllysine). His-63 provides a ligand contact to heme b. Position 82 is an N6-acetyllysine (Lys-82). His-92 is a binding site for heme b. Residue Cys-93 is modified to S-nitrosocysteine. N6-acetyllysine is present on Lys-144.

This sequence belongs to the globin family. As to quaternary structure, tetramer of two alpha and two different beta chains. Two external cysteine residues at beta-16 and beta-52 cause reversible polymerization to octamers and most likely irreversible formation of higher polymers. Red blood cells.

Its function is as follows. Involved in oxygen transport from the lung to the various peripheral tissues. The polypeptide is Hemoglobin subunit beta (HBB) (Echinops telfairi (Lesser hedgehog tenrec)).